The sequence spans 115 residues: Probable non-functional T cell receptor beta variable 7-3 (115 aa).

Positions M1–A21 are cleaved as a signal peptide. Positions G22 to L115 constitute an Ig-like domain.

As to quaternary structure, most probably, the alpha-beta TR is not assembled due to incorrect folding of the beta chain. Alpha-beta TR is a heterodimer composed of an alpha and beta chain; disulfide-linked. The alpha-beta TR is associated with the transmembrane signaling CD3 coreceptor proteins to form the TR-CD3 (TcR or TCR). The assembly of alpha-beta TR heterodimers with CD3 occurs in the endoplasmic reticulum where a single alpha-beta TR heterodimer associates with one CD3D-CD3E heterodimer, one CD3G-CD3E heterodimer and one CD247 homodimer forming a stable octameric structure. CD3D-CD3E and CD3G-CD3E heterodimers preferentially associate with TR alpha and TR beta chains, respectively. The association of the CD247 homodimer is the last step of TcR assembly in the endoplasmic reticulum and is required for transport to the cell surface.

It localises to the cell membrane. Probable non-functional open reading frame (ORF) of V region of the variable domain of T cell receptor (TR) beta chain. Non-functional ORF generally cannot participate in the synthesis of a productive T cell receptor (TR) chain due to altered V-(D)-J or switch recombination and/or splicing site (at mRNA level) and/or conserved amino acid change (protein level). Alpha-beta T cell receptors are antigen specific receptors which are essential to the immune response and are present on the cell surface of T lymphocytes. Recognize peptide-major histocompatibility (MH) (pMH) complexes that are displayed by antigen presenting cells (APC), a prerequisite for efficient T cell adaptive immunity against pathogens. Binding of alpha-beta TR to pMH complex initiates TR-CD3 clustering on the cell surface and intracellular activation of LCK that phosphorylates the ITAM motifs of CD3G, CD3D, CD3E and CD247 enabling the recruitment of ZAP70. In turn ZAP70 phosphorylates LAT, which recruits numerous signaling molecules to form the LAT signalosome. The LAT signalosome propagates signal branching to three major signaling pathways, the calcium, the mitogen-activated protein kinase (MAPK) kinase and the nuclear factor NF-kappa-B (NF-kB) pathways, leading to the mobilization of transcription factors that are critical for gene expression and essential for T cell growth and differentiation. The T cell repertoire is generated in the thymus, by V-(D)-J rearrangement. This repertoire is then shaped by intrathymic selection events to generate a peripheral T cell pool of self-MH restricted, non-autoaggressive T cells. Post-thymic interaction of alpha-beta TR with the pMH complexes shapes TR structural and functional avidity. The chain is Probable non-functional T cell receptor beta variable 7-3 from Homo sapiens (Human).